Here is a 208-residue protein sequence, read N- to C-terminus: Cytochrome c oxidase assembly protein CtaG (208 aa).

At 1-19 (MKQRPTGPDTTPRNRRGFG) the chain is on the cytoplasmic side. A helical; Signal-anchor for type II membrane protein transmembrane segment spans residues 20 to 42 (RDTAVASVCGLVVALMVGASYAA). Over 43-208 (VPFYNWFCRV…SEAGPRQGAL (166 aa)) the chain is Periplasmic.

It belongs to the COX11/CtaG family.

The protein resides in the cell inner membrane. Exerts its effect at some terminal stage of cytochrome c oxidase synthesis, probably by being involved in the insertion of the copper B into subunit I. The polypeptide is Cytochrome c oxidase assembly protein CtaG (Rhodopseudomonas palustris (strain BisA53)).